Here is a 461-residue protein sequence, read N- to C-terminus: Putative cytochrome P450 132 (461 aa).

Residue Cys-409 coordinates heme.

It belongs to the cytochrome P450 family. It depends on heme as a cofactor.

The protein is Putative cytochrome P450 132 (cyp132) of Mycobacterium bovis (strain ATCC BAA-935 / AF2122/97).